A 518-amino-acid chain; its full sequence is Phenylacetate 2-hydroxylase (518 aa).

Residue C437 coordinates heme.

It belongs to the cytochrome P450 family.

The enzyme catalyses 2-phenylacetate + reduced [NADPH--hemoprotein reductase] + O2 = (2-hydroxyphenyl)acetate + oxidized [NADPH--hemoprotein reductase] + H2O + H(+). It participates in aromatic compound metabolism; phenylacetate degradation. Catalyzes the hydroxylation of phenylacetate to 2-hydroxyphenylacetate in the homogentisate pathway. The homogentisate pathway is used to catabolize phenylacetate and use it as a carbon source. Can also catalyze the hydroxylation of 3-hydroxyphenylacetate to 2,5-dihydroxyphenylacetate (homogentisate) at low efficiency. This chain is Phenylacetate 2-hydroxylase (phacA), found in Emericella nidulans (Aspergillus nidulans).